The following is a 137-amino-acid chain: MGSRALLLLKATTAETLLFTSKSTFSKALIRNSTRSFSTRSALLPPDLPRLAETARISLTPHEVEEFAPKIRQVIDWFGQLQAVDLQSIEPSIRADTEGDNLRDDSPETFENREAIIAAIPSYEEPYLKVPKVLNKD.

It belongs to the GatC family. Subunit of the heterotrimeric GatCAB amidotransferase (AdT) complex, composed of A, B and C subunits.

The protein localises to the mitochondrion. The protein resides in the plastid. It localises to the chloroplast. The enzyme catalyses L-glutamyl-tRNA(Gln) + L-glutamine + ATP + H2O = L-glutaminyl-tRNA(Gln) + L-glutamate + ADP + phosphate + H(+). Allows the formation of correctly charged Gln-tRNA(Gln) through the transamidation of misacylated Glu-tRNA(Gln) in chloroplasts and mitochondria. The reaction takes place in the presence of glutamine and ATP through an activated gamma-phospho-Glu-tRNA(Gln). This is Glutamyl-tRNA(Gln) amidotransferase subunit C, chloroplastic/mitochondrial from Vitis vinifera (Grape).